Consider the following 156-residue polypeptide: Small ribosomal subunit protein uS7 (156 aa).

Belongs to the universal ribosomal protein uS7 family. Part of the 30S ribosomal subunit. Contacts proteins S9 and S11.

In terms of biological role, one of the primary rRNA binding proteins, it binds directly to 16S rRNA where it nucleates assembly of the head domain of the 30S subunit. Is located at the subunit interface close to the decoding center, probably blocks exit of the E-site tRNA. This Salinispora tropica (strain ATCC BAA-916 / DSM 44818 / JCM 13857 / NBRC 105044 / CNB-440) protein is Small ribosomal subunit protein uS7.